We begin with the raw amino-acid sequence, 808 residues long: Protein NLP5 (808 aa).

Residues 56-68 are compositionally biased toward polar residues; it reads PTQDTSNSLSQMY. The segment at 56 to 83 is disordered; the sequence is PTQDTSNSLSQMYGQDCPERSSLEDQNQ. The RWP-RK domain maps to 536-617; sequence NRVTEKKRTK…IDSVEGVSGH (82 aa). Residues 660-680 form a disordered region; that stretch reads SPGSSCSHSSSCSSETQVIKE. Low complexity predominate over residues 663 to 673; sequence SSCSHSSSCSS. The 84-residue stretch at 710 to 793 folds into the PB1 domain; that stretch reads FLRVKVSYEE…QTIKLLLQLS (84 aa).

The protein resides in the nucleus. Its function is as follows. Probable transcription factor. This is Protein NLP5 (NLP5) from Arabidopsis thaliana (Mouse-ear cress).